Reading from the N-terminus, the 436-residue chain is Eukaryotic translation initiation factor 4B (436 aa).

Residues 56 to 98 (AKNNSNNTRSGGFGGSFGGRSRLDPALGGGSSDRREEYPVPDA) form a disordered region. Phosphoserine occurs at positions 65 and 71. An RRM domain is found at 101-183 (YRAVINNIPW…RTVYVSVAAP (83 aa)). The segment at 185-406 (RGGGADVDWS…EKQNGDAKEN (222 aa)) is disordered. Residues 190-210 (DVDWSSARGSNFQGDGREDAP) form a 1; approximate repeat. The 7 X approximate tandem repeats stretch occupies residues 190 to 350 (DVDWSSARGS…DWGAARGAQF (161 aa)). Tandem repeats lie at residues 211-232 (DLDW…REEV), 233-258 (DIDW…REEV), 259-284 (DIDW…REEP), 285-310 (DIDW…REEP), and 311-340 (DIDW…EPAL). Residues 329–338 (PRREREKEEP) show a composition bias toward basic and acidic residues. Residues 341–350 (DWGAARGAQF) form a 7; truncated repeat. 2 stretches are compositionally biased toward basic and acidic residues: residues 359–376 (TYKD…EQPK) and 397–406 (EKQNGDAKEN).

Its function is as follows. Involved in translation initiation. May be the homolog of mammalian eIF4B and be part of an RNA helicase. STM1/TIF3 is a non-essential gene. In Saccharomyces cerevisiae (strain ATCC 204508 / S288c) (Baker's yeast), this protein is Eukaryotic translation initiation factor 4B (TIF3).